Reading from the N-terminus, the 155-residue chain is Ribosomal RNA large subunit methyltransferase H (155 aa).

S-adenosyl-L-methionine is bound by residues L72, G103, and 122–127 (LSDLTL).

Belongs to the RNA methyltransferase RlmH family. As to quaternary structure, homodimer.

The protein resides in the cytoplasm. It catalyses the reaction pseudouridine(1915) in 23S rRNA + S-adenosyl-L-methionine = N(3)-methylpseudouridine(1915) in 23S rRNA + S-adenosyl-L-homocysteine + H(+). Specifically methylates the pseudouridine at position 1915 (m3Psi1915) in 23S rRNA. The polypeptide is Ribosomal RNA large subunit methyltransferase H (Verminephrobacter eiseniae (strain EF01-2)).